A 157-amino-acid chain; its full sequence is Urease accessory protein UreE (157 aa).

Belongs to the UreE family.

The protein resides in the cytoplasm. In terms of biological role, involved in urease metallocenter assembly. Binds nickel. Probably functions as a nickel donor during metallocenter assembly. The polypeptide is Urease accessory protein UreE (Paenarthrobacter aurescens (strain TC1)).